The sequence spans 263 residues: Ubiquitin domain-containing protein 7SL RNA2 (263 aa).

A Ubiquitin-like 1 domain is found at 1–53; it reads MNVDIDTETGSSFSITIDFGETVLQIKEKIEKSQGIPVSKQILYLDGKALEDD. Residues 74-93 are disordered; that stretch reads ADPNQSNEQTEQSKQIDDKK. Residues 76–86 are compositionally biased toward polar residues; that stretch reads PNQSNEQTEQS. The Ubiquitin-like 2 domain maps to 184-263; sequence FTVHVKPYQE…GDTIELIREK (80 aa).

This sequence belongs to the ubiquitin family. In terms of tissue distribution, expressed in seedlings, roots, stems, rosettes and flowers (at protein level).

It localises to the nucleus. Controls phase transition from the vegetative to the reproductive state. Involved in the maintenance of the shoot apical meristem (SAM) thus preventing inflorescence meristem (IM) formation and subsequent inflorescence stem development during flowering. Regulates leaf and organ morphology. The polypeptide is Ubiquitin domain-containing protein 7SL RNA2 (Arabidopsis thaliana (Mouse-ear cress)).